Consider the following 939-residue polypeptide: Valine--tRNA ligase (939 aa).

The short motif at 45–55 (PNVTGTLHMGH) is the 'HIGH' region element. The 'KMSKS' region signature appears at 549 to 553 (KMSKS). K552 is a binding site for ATP. Residues 876–939 (AAETARLRKE…KIRVQLVKLA (64 aa)) adopt a coiled-coil conformation.

The protein belongs to the class-I aminoacyl-tRNA synthetase family. ValS type 1 subfamily. As to quaternary structure, monomer.

It localises to the cytoplasm. The catalysed reaction is tRNA(Val) + L-valine + ATP = L-valyl-tRNA(Val) + AMP + diphosphate. In terms of biological role, catalyzes the attachment of valine to tRNA(Val). As ValRS can inadvertently accommodate and process structurally similar amino acids such as threonine, to avoid such errors, it has a 'posttransfer' editing activity that hydrolyzes mischarged Thr-tRNA(Val) in a tRNA-dependent manner. The polypeptide is Valine--tRNA ligase (Chromobacterium violaceum (strain ATCC 12472 / DSM 30191 / JCM 1249 / CCUG 213 / NBRC 12614 / NCIMB 9131 / NCTC 9757 / MK)).